The primary structure comprises 270 residues: Acyl-[acyl-carrier-protein]--UDP-N-acetylglucosamine O-acyltransferase (270 aa).

This sequence belongs to the transferase hexapeptide repeat family. LpxA subfamily. As to quaternary structure, homotrimer.

The protein resides in the cytoplasm. The enzyme catalyses a (3R)-hydroxyacyl-[ACP] + UDP-N-acetyl-alpha-D-glucosamine = a UDP-3-O-[(3R)-3-hydroxyacyl]-N-acetyl-alpha-D-glucosamine + holo-[ACP]. Its pathway is glycolipid biosynthesis; lipid IV(A) biosynthesis; lipid IV(A) from (3R)-3-hydroxytetradecanoyl-[acyl-carrier-protein] and UDP-N-acetyl-alpha-D-glucosamine: step 1/6. Functionally, involved in the biosynthesis of lipid A, a phosphorylated glycolipid that anchors the lipopolysaccharide to the outer membrane of the cell. This is Acyl-[acyl-carrier-protein]--UDP-N-acetylglucosamine O-acyltransferase from Helicobacter pylori (strain J99 / ATCC 700824) (Campylobacter pylori J99).